Reading from the N-terminus, the 556-residue chain is Formate--tetrahydrofolate ligase (556 aa).

64–71 (TPAGEGKT) contacts ATP.

This sequence belongs to the formate--tetrahydrofolate ligase family.

It carries out the reaction (6S)-5,6,7,8-tetrahydrofolate + formate + ATP = (6R)-10-formyltetrahydrofolate + ADP + phosphate. Its pathway is one-carbon metabolism; tetrahydrofolate interconversion. In Haemophilus ducreyi (strain 35000HP / ATCC 700724), this protein is Formate--tetrahydrofolate ligase.